The sequence spans 818 residues: ATM interactor (818 aa).

Over residues 1 to 34 (MAATEAAAADSAGPAPGVPATPASTRGAAAASSP) the composition is skewed to low complexity. Residues 1–62 (MAATEAAAAD…RAAAPVPPAR (62 aa)) form a disordered region. Residues 80 to 105 (ILCTVRGCGKILPNSPALNMHLVKSH) form a C2H2-type 1 zinc finger. The C2H2-type 2; degenerate zinc finger occupies 161–181 (HKCSKCSNSYGTEWDLKRHEE). Positions 210–221 (HEIPAEHRDPPS) are enriched in basic and acidic residues. 2 disordered regions span residues 210–284 (HEIP…ATPP) and 603–625 (DNRS…GSAQ). Residues 219–437 (PPSKKRKMES…PDSSVSSCSQ (219 aa)) are required for formation of RAD51 foci. 2 stretches are compositionally biased toward polar residues: residues 229–243 (YLQN…TEPL) and 603–612 (DNRSLLSDTN).

As to quaternary structure, interacts via its C-terminus with ATM. Interacts with DYNLL; this interaction inhibits ATMIN transcriptional activity and hence may play a role in a feedback loop whereby DYNLL1 inhibits transactivation of its own promoter by ATMIN. ATMIN.

The protein resides in the nucleus. Functionally, transcription factor. Plays a crucial role in cell survival and RAD51 foci formation in response to methylating DNA damage. Involved in regulating the activity of ATM in the absence of DNA damage. May play a role in stabilizing ATM. Binds to the DYNLL1 promoter and activates its transcription. This chain is ATM interactor, found in Mus musculus (Mouse).